We begin with the raw amino-acid sequence, 468 residues long: Serine/threonine-protein phosphatase 2A 55 kDa regulatory subunit B beta isoform (468 aa).

7 WD repeats span residues 47-86 (SSAD…KNQP), 112-153 (EIEE…KRPE), 196-234 (AHTY…RSFN), 245-285 (ELTE…LCDK), 304-342 (EIIS…RPIE), 359-400 (ENDC…DVTL), and 435-468 (DFSK…DKVN).

This sequence belongs to the phosphatase 2A regulatory subunit B family. In terms of assembly, PP2A consists of a common heterodimeric core enzyme, composed of a 36 kDa catalytic subunit (subunit C) and a 65 kDa constant regulatory subunit (PR65 or subunit A), that associates with a variety of regulatory subunits.

It is found in the cytoplasm. The protein localises to the cytoskeleton. It localises to the membrane. Functionally, the B regulatory subunit might modulate substrate selectivity and catalytic activity, and might also direct the localization of the catalytic enzyme to a particular subcellular compartment. Negatively controls the initiation of oocyte maturation. The protein is Serine/threonine-protein phosphatase 2A 55 kDa regulatory subunit B beta isoform (ppp2r2b) of Xenopus laevis (African clawed frog).